The sequence spans 285 residues: Bifunctional protein FolD (285 aa).

NADP(+) is bound by residues 165-167 (GRS) and Ser-190.

Belongs to the tetrahydrofolate dehydrogenase/cyclohydrolase family. In terms of assembly, homodimer.

The enzyme catalyses (6R)-5,10-methylene-5,6,7,8-tetrahydrofolate + NADP(+) = (6R)-5,10-methenyltetrahydrofolate + NADPH. It catalyses the reaction (6R)-5,10-methenyltetrahydrofolate + H2O = (6R)-10-formyltetrahydrofolate + H(+). Its pathway is one-carbon metabolism; tetrahydrofolate interconversion. Catalyzes the oxidation of 5,10-methylenetetrahydrofolate to 5,10-methenyltetrahydrofolate and then the hydrolysis of 5,10-methenyltetrahydrofolate to 10-formyltetrahydrofolate. The polypeptide is Bifunctional protein FolD (Burkholderia multivorans (strain ATCC 17616 / 249)).